The chain runs to 267 residues: tRNA pseudouridine synthase A (267 aa).

Catalysis depends on aspartate 54, which acts as the Nucleophile. Tyrosine 114 contacts substrate.

It belongs to the tRNA pseudouridine synthase TruA family. In terms of assembly, homodimer.

It carries out the reaction uridine(38/39/40) in tRNA = pseudouridine(38/39/40) in tRNA. Formation of pseudouridine at positions 38, 39 and 40 in the anticodon stem and loop of transfer RNAs. This Tropheryma whipplei (strain Twist) (Whipple's bacillus) protein is tRNA pseudouridine synthase A.